A 190-amino-acid chain; its full sequence is Elongation factor P (190 aa).

The protein belongs to the elongation factor P family.

It is found in the cytoplasm. Its pathway is protein biosynthesis; polypeptide chain elongation. Involved in peptide bond synthesis. Stimulates efficient translation and peptide-bond synthesis on native or reconstituted 70S ribosomes in vitro. Probably functions indirectly by altering the affinity of the ribosome for aminoacyl-tRNA, thus increasing their reactivity as acceptors for peptidyl transferase. The sequence is that of Elongation factor P from Bartonella bacilliformis (strain ATCC 35685 / KC583 / Herrer 020/F12,63).